The sequence spans 114 residues: Nascent polypeptide-associated complex protein (114 aa).

Residues 5-69 (PSQFKNLERM…AKEAQKEEPK (65 aa)) enclose the NAC-A/B domain.

The protein belongs to the NAC-alpha family. In terms of assembly, homodimer. Interacts with the ribosome. Binds ribosomal RNA.

Functionally, contacts the emerging nascent chain on the ribosome. This Sulfurisphaera tokodaii (strain DSM 16993 / JCM 10545 / NBRC 100140 / 7) (Sulfolobus tokodaii) protein is Nascent polypeptide-associated complex protein.